Consider the following 236-residue polypeptide: B-cell antigen receptor complex-associated protein alpha chain (236 aa).

Positions 1-32 (MPGGPGLLQALCATTFLLFLISAGGLGPGSQA) are cleaved as a signal peptide. In terms of domain architecture, Ig-like C2-type spans 33–122 (LWVDGGPPSM…EKDLNQKILS (90 aa)). Residues 33-151 (LWVDGGPPSM…LDMGEGTKNN (119 aa)) are Extracellular-facing. A disulfide bridge connects residues Cys-54 and Cys-109. Asn-66 and Asn-76 each carry an N-linked (GlcNAc...) asparagine glycan. The helical transmembrane segment at 152 to 172 (IITAEGIILLFCAVVPGTLLL) threads the bilayer. Over 173-236 (FRKRWQNMKF…GDGDVQLEKP (64 aa)) the chain is Cytoplasmic. The 29-residue stretch at 185 to 213 (DAQDDYEDENLYEGLNLDDCSMYEDISRG) folds into the ITAM domain. Tyr-196 carries the phosphotyrosine; by SRC-type Tyr-kinases modification. Phosphotyrosine is present on Tyr-207. Asymmetric dimethylarginine; by PRMT1 is present on Arg-212. Residue Tyr-218 is modified to Phosphotyrosine; by Tyr-kinases.

Heterodimer of alpha and beta chains; disulfide-linked. Part of the B-cell antigen receptor complex where the alpha/beta chain heterodimer is non-covalently associated with an antigen-specific membrane-bound surface immunoglobulin of two heavy chains and two light chains. Interacts through its phosphorylated ITAM domain with the SH2 domains of SYK which stimulates SYK autophosphorylation and activation. Also interacts, when phosphorylated on Tyr-207, with the SH2 domain of BLNK/SLP65, bringing BLNK into proximity with SYK and allowing SYK to phosphorylate BLNK which is necessary for trafficking of the BCR to late endosomes. Interacts with Src-family tyrosine kinases including FYN and LYN, increasing their activity. Post-translationally, phosphorylated on tyrosine, serine and threonine residues upon B-cell activation. Phosphorylation of tyrosine residues by Src-family kinases, including LYN, is an early and essential feature of the BCR signaling cascade. The phosphorylated tyrosines serve as docking sites for SH2-domain containing kinases, leading to their activation which in turn leads to phosphorylation of downstream targets. Phosphorylation of serine and threonine residues may prevent subsequent tyrosine phosphorylation. Arginine methylation in the ITAM domain may interfere with the binding of SYK. It promotes signals leading to B-cell differentiation.

It localises to the cell membrane. In terms of biological role, required in cooperation with CD79B for initiation of the signal transduction cascade activated by binding of antigen to the B-cell antigen receptor complex (BCR) which leads to internalization of the complex, trafficking to late endosomes and antigen presentation. Also required for BCR surface expression and for efficient differentiation of pro- and pre-B-cells. Stimulates SYK autophosphorylation and activation. Binds to BLNK, bringing BLNK into proximity with SYK and allowing SYK to phosphorylate BLNK. Also interacts with and increases activity of some Src-family tyrosine kinases. Represses BCR signaling during development of immature B-cells. The polypeptide is B-cell antigen receptor complex-associated protein alpha chain (CD79A) (Canis lupus familiaris (Dog)).